A 1549-amino-acid polypeptide reads, in one-letter code: ATP-binding cassette sub-family C member 9 (1549 aa).

At 1–30 (MSLSFCGNNISSYNINDGVLQNSCFVDALN) the chain is on the extracellular side. Asn9 carries N-linked (GlcNAc...) asparagine glycosylation. The chain crosses the membrane as a helical span at residues 31–51 (LVPHVFLLFITFPILFIGWGS). The Cytoplasmic portion of the chain corresponds to 52–72 (QSSKVQIHHNTWLHFPGHNLR). The chain crosses the membrane as a helical span at residues 73 to 93 (WILTFALLFVHVCEIAEGIVS). The Extracellular portion of the chain corresponds to 94–101 (DSRRESRH). Residues 102-122 (LHLFMPAVMGFVATTTSIVYY) form a helical membrane-spanning segment. At 123-132 (HNIETSNFPK) the chain is on the cytoplasmic side. The helical transmembrane segment at 133–153 (LLLALFLYWVMAFITKTIKLV) threads the bilayer. Residues 154–167 (KYCQSGLDISNLRF) lie on the Extracellular side of the membrane. Residues 168–188 (CITGMMVILNGLLMAVEINVI) traverse the membrane as a helical segment. The Cytoplasmic portion of the chain corresponds to 189–301 (RVRRYVFFMN…AFGRPILLSS (113 aa)). One can recognise an ABC transmembrane type-1 1 domain in the interval 297 to 597 (ILLSSTFRYL…LSTVVRFAVK (301 aa)). Residues 302–322 (TFRYLADLLGFAGPLCISGIV) traverse the membrane as a helical segment. The Extracellular portion of the chain corresponds to 323–350 (QRVNETQNGTNNTTGISETLSSKEFLEN). N-linked (GlcNAc...) asparagine glycans are attached at residues Asn326, Asn330, Asn333, and Asn334. The chain crosses the membrane as a helical span at residues 351 to 371 (AYVLAVLLFLALILQRTFLQA). At 372-423 (SYYVTIETGINLRGALLAMIYNKILRLSTSNLSMGEMTLGQINNLVAIETNQ) the chain is on the cytoplasmic side. The chain crosses the membrane as a helical span at residues 424-444 (LMWFLFLCPNLWAMPVQIIMG). Residues 445-455 (VILLYNLLGSS) are Extracellular-facing. The chain crosses the membrane as a helical span at residues 456-476 (ALVGAAVIVLLAPIQYFIATK). Residues 477–531 (LAEAQKSTLDYSTERLKKTNEILKGIKLLKLYAWEHIFCKSVEETRMKELSSLKT) are Cytoplasmic-facing. The chain crosses the membrane as a helical span at residues 532–552 (FALYTSLSIFMNAAIPIAAVL). Residues 553–571 (ATFVTHAYASGNNLKPAEA) lie on the Extracellular side of the membrane. The chain crosses the membrane as a helical span at residues 572–592 (FASLSLFHILVTPLFLLSTVV). Topologically, residues 593-990 (RFAVKAIISV…TCWRYLTSGG (398 aa)) are cytoplasmic. The 241-residue stretch at 672–912 (IKVTNGYFSW…DVELYEHWKT (241 aa)) folds into the ABC transporter 1 domain. 705 to 712 (GQVGCGKS) provides a ligand contact to ATP. Positions 944–967 (REAKAQMEDEDEEEEEEEDEDDNM) are disordered. Over residues 951–966 (EDEDEEEEEEEDEDDN) the composition is skewed to acidic residues. A helical membrane pass occupies residues 991 to 1011 (FFLLILMIFSKLLKHSVIVAI). Residues 994–1274 (LILMIFSKLL…VVRNLADLEV (281 aa)) enclose the ABC transmembrane type-1 2 domain. Residues 1012–1034 (DYWLATWTSEYSINNTGKADQTY) are Extracellular-facing. A helical transmembrane segment spans residues 1035-1055 (YVAGFSILCGAGIFLCLVTSL). Residues 1056–1127 (TVEWMGLTAA…TLLCLSAIGM (72 aa)) are Cytoplasmic-facing. The chain crosses the membrane as a helical span at residues 1128–1148 (ISYATPVFLVALLPLGVAFYF). The Extracellular segment spans residues 1149-1245 (IQKYFRVASK…IASISGSSNS (97 aa)). A helical transmembrane segment spans residues 1246–1266 (GLVGLGLLYALTITNYLNWVV). Topologically, residues 1267–1549 (RNLADLEVQM…LFSTLVMTNK (283 aa)) are cytoplasmic. The ABC transporter 2 domain maps to 1312–1546 (IKIHDLCVRY…KNGLFSTLVM (235 aa)). ATP is bound at residue 1346–1353 (GRTGSGKS).

Belongs to the ABC transporter superfamily. ABCC family. Conjugate transporter (TC 3.A.1.208) subfamily. Interacts with KCNJ11. Interacts with KCNJ8.

Its subcellular location is the membrane. Functionally, subunit of ATP-sensitive potassium channels (KATP). Can form cardiac and smooth muscle-type KATP channels with KCNJ11. KCNJ11 forms the channel pore while ABCC9 is required for activation and regulation. Can form a sulfonylurea-sensitive but ATP-insensitive potassium channel with KCNJ8. The polypeptide is ATP-binding cassette sub-family C member 9 (ABCC9) (Homo sapiens (Human)).